The chain runs to 306 residues: Ribonuclease Z (306 aa).

Residues His-63, His-65, Asp-67, His-68, His-141, Asp-211, and His-269 each contribute to the Zn(2+) site. Asp-67 serves as the catalytic Proton acceptor.

The protein belongs to the RNase Z family. In terms of assembly, homodimer. Zn(2+) serves as cofactor.

It carries out the reaction Endonucleolytic cleavage of RNA, removing extra 3' nucleotides from tRNA precursor, generating 3' termini of tRNAs. A 3'-hydroxy group is left at the tRNA terminus and a 5'-phosphoryl group is left at the trailer molecule.. Zinc phosphodiesterase, which displays some tRNA 3'-processing endonuclease activity. Probably involved in tRNA maturation, by removing a 3'-trailer from precursor tRNA. This is Ribonuclease Z from Staphylococcus aureus (strain Mu3 / ATCC 700698).